Reading from the N-terminus, the 694-residue chain is Elongation factor G (694 aa).

The tr-type G domain occupies 6–288 (KLYRNIGIAA…GVIEYLPSPT (283 aa)). GTP is bound by residues 15–22 (AHVDAGKT), 86–90 (DTPGH), and 140–143 (NKMD).

This sequence belongs to the TRAFAC class translation factor GTPase superfamily. Classic translation factor GTPase family. EF-G/EF-2 subfamily.

It localises to the cytoplasm. In terms of biological role, catalyzes the GTP-dependent ribosomal translocation step during translation elongation. During this step, the ribosome changes from the pre-translocational (PRE) to the post-translocational (POST) state as the newly formed A-site-bound peptidyl-tRNA and P-site-bound deacylated tRNA move to the P and E sites, respectively. Catalyzes the coordinated movement of the two tRNA molecules, the mRNA and conformational changes in the ribosome. The polypeptide is Elongation factor G (Legionella pneumophila (strain Lens)).